A 479-amino-acid chain; its full sequence is Ribosomal RNA small subunit methyltransferase F (479 aa).

Residues 125–131 (AAAPGSK), glutamate 149, aspartate 176, and aspartate 194 each bind S-adenosyl-L-methionine. Catalysis depends on cysteine 247, which acts as the Nucleophile.

The protein belongs to the class I-like SAM-binding methyltransferase superfamily. RsmB/NOP family.

The protein resides in the cytoplasm. It carries out the reaction cytidine(1407) in 16S rRNA + S-adenosyl-L-methionine = 5-methylcytidine(1407) in 16S rRNA + S-adenosyl-L-homocysteine + H(+). Functionally, specifically methylates the cytosine at position 1407 (m5C1407) of 16S rRNA. The sequence is that of Ribosomal RNA small subunit methyltransferase F from Salmonella agona (strain SL483).